We begin with the raw amino-acid sequence, 367 residues long: 3-dehydroquinate synthase (367 aa).

NAD(+) is bound by residues 69 to 74 (DGEAFK), 103 to 107 (GVIGD), 127 to 128 (TT), lysine 140, and lysine 149. Residues glutamate 182, histidine 245, and histidine 262 each coordinate Zn(2+).

This sequence belongs to the sugar phosphate cyclases superfamily. Dehydroquinate synthase family. It depends on Co(2+) as a cofactor. Zn(2+) serves as cofactor. The cofactor is NAD(+).

It is found in the cytoplasm. The catalysed reaction is 7-phospho-2-dehydro-3-deoxy-D-arabino-heptonate = 3-dehydroquinate + phosphate. It functions in the pathway metabolic intermediate biosynthesis; chorismate biosynthesis; chorismate from D-erythrose 4-phosphate and phosphoenolpyruvate: step 2/7. Catalyzes the conversion of 3-deoxy-D-arabino-heptulosonate 7-phosphate (DAHP) to dehydroquinate (DHQ). This chain is 3-dehydroquinate synthase, found in Ectopseudomonas mendocina (strain ymp) (Pseudomonas mendocina).